The following is a 122-amino-acid chain: Large ribosomal subunit protein uL18 (122 aa).

It belongs to the universal ribosomal protein uL18 family. In terms of assembly, part of the 50S ribosomal subunit; part of the 5S rRNA/L5/L18/L25 subcomplex. Contacts the 5S and 23S rRNAs.

Its function is as follows. This is one of the proteins that bind and probably mediate the attachment of the 5S RNA into the large ribosomal subunit, where it forms part of the central protuberance. This chain is Large ribosomal subunit protein uL18, found in Desulfitobacterium hafniense (strain DSM 10664 / DCB-2).